The primary structure comprises 512 residues: Serine--tRNA ligase, cytoplasmic (512 aa).

Position 1 is an N-acetylmethionine (M1). The tract at residues 9–61 (RVDKGGDPALIRETQEKRFKDPGLVDQLVKADSEWRRCRFRADNLNKLKNLCS) is interaction with tRNA. Phosphoserine is present on S241. Positions 271 and 302 each coordinate L-serine. Residues 302 to 304 (RQE) and 318 to 321 (VHQF) each bind ATP. Position 323 is an N6-acetyllysine (K323). E325 is an L-serine binding site. 391–394 (ELVS) is a binding site for ATP. Residues N427 and T429 each coordinate L-serine. The disordered stretch occupies residues 472–512 (KPAPIDQEPSKKQKKQHEGSKKKAKEVTLESQLQNMEVTEA). Over residues 479–499 (EPSKKQKKQHEGSKKKAKEVT) the composition is skewed to basic and acidic residues. Residues 482–494 (KKQKKQHEGSKKK) carry the Nuclear localization signal motif. Residues 500–512 (LESQLQNMEVTEA) are compositionally biased toward polar residues.

Belongs to the class-II aminoacyl-tRNA synthetase family. Type-1 seryl-tRNA synthetase subfamily. In terms of assembly, homodimer. The tRNA molecule may bind across the dimer. Interacts with SIRT2. Interacts with METTL6; interaction is required for the tRNA N(3)-methylcytidine methyltransferase activity of METTL6.

It localises to the cytoplasm. The protein localises to the nucleus. It carries out the reaction tRNA(Ser) + L-serine + ATP = L-seryl-tRNA(Ser) + AMP + diphosphate + H(+). The enzyme catalyses tRNA(Sec) + L-serine + ATP = L-seryl-tRNA(Sec) + AMP + diphosphate + H(+). The protein operates within aminoacyl-tRNA biosynthesis; selenocysteinyl-tRNA(Sec) biosynthesis; L-seryl-tRNA(Sec) from L-serine and tRNA(Sec): step 1/1. Functionally, catalyzes the attachment of serine to tRNA(Ser) in a two-step reaction: serine is first activated by ATP to form Ser-AMP and then transferred to the acceptor end of tRNA(Ser). Is probably also able to aminoacylate tRNA(Sec) with serine, to form the misacylated tRNA L-seryl-tRNA(Sec), which will be further converted into selenocysteinyl-tRNA(Sec). In the nucleus, binds to the VEGFA core promoter and prevents MYC binding and transcriptional activation by MYC. Recruits SIRT2 to the VEGFA promoter, promoting deacetylation of histone H4 at 'Lys-16' (H4K16). Thereby, inhibits the production of VEGFA and sprouting angiogenesis mediated by VEGFA. The polypeptide is Serine--tRNA ligase, cytoplasmic (SARS1) (Cricetulus griseus (Chinese hamster)).